Reading from the N-terminus, the 353-residue chain is UDP-N-acetylenolpyruvoylglucosamine reductase (353 aa).

Residues Leu-31 to Pro-201 enclose the FAD-binding PCMH-type domain. Arg-177 is an active-site residue. The active-site Proton donor is Ser-250. Residue Glu-346 is part of the active site.

The protein belongs to the MurB family. Requires FAD as cofactor.

It localises to the cytoplasm. The enzyme catalyses UDP-N-acetyl-alpha-D-muramate + NADP(+) = UDP-N-acetyl-3-O-(1-carboxyvinyl)-alpha-D-glucosamine + NADPH + H(+). It participates in cell wall biogenesis; peptidoglycan biosynthesis. In terms of biological role, cell wall formation. In Bordetella parapertussis (strain 12822 / ATCC BAA-587 / NCTC 13253), this protein is UDP-N-acetylenolpyruvoylglucosamine reductase.